Consider the following 342-residue polypeptide: MTDNPLLSSASQIEDQDAALRPKTLAEFVGQAGAKDNLQVFIESAKQRREAMDHVLFFGPPGLGKTTLAQIIARELGVNFRATSGPVIAKAGDLAALLTNLEHGDVLFIDEIHRLNPVVEEVLYPAMEDRALDLIIGEGPSARSVRIDLPPFTLIGATTRQGLLQTPLRDRFGIPVRLQFYSVEELERVVARGASLMGIGIDKGGATEIARRSRGTPRVAGRLLRRVRDFAQVAGAEKITQSIADNALTRLEVDKIGLDLQDRRYLTMIADIYKGGPVGVETLAAGLSEPRDTIEEVIEPYLIQLGMIARTARGRCLNDRGWQHLGLAPPSGQMPGLFGPDE.

The large ATPase domain (RuvB-L) stretch occupies residues 2–181 (TDNPLLSSAS…FGIPVRLQFY (180 aa)). ATP contacts are provided by L20, R21, G62, K65, T66, T67, R171, Y181, and R218. T66 serves as a coordination point for Mg(2+). Residues 182–252 (SVEELERVVA…IADNALTRLE (71 aa)) are small ATPAse domain (RuvB-S). The interval 255-342 (KIGLDLQDRR…QMPGLFGPDE (88 aa)) is head domain (RuvB-H). R291, R310, and R315 together coordinate DNA.

Belongs to the RuvB family. As to quaternary structure, homohexamer. Forms an RuvA(8)-RuvB(12)-Holliday junction (HJ) complex. HJ DNA is sandwiched between 2 RuvA tetramers; dsDNA enters through RuvA and exits via RuvB. An RuvB hexamer assembles on each DNA strand where it exits the tetramer. Each RuvB hexamer is contacted by two RuvA subunits (via domain III) on 2 adjacent RuvB subunits; this complex drives branch migration. In the full resolvosome a probable DNA-RuvA(4)-RuvB(12)-RuvC(2) complex forms which resolves the HJ.

It localises to the cytoplasm. The enzyme catalyses ATP + H2O = ADP + phosphate + H(+). Its function is as follows. The RuvA-RuvB-RuvC complex processes Holliday junction (HJ) DNA during genetic recombination and DNA repair, while the RuvA-RuvB complex plays an important role in the rescue of blocked DNA replication forks via replication fork reversal (RFR). RuvA specifically binds to HJ cruciform DNA, conferring on it an open structure. The RuvB hexamer acts as an ATP-dependent pump, pulling dsDNA into and through the RuvAB complex. RuvB forms 2 homohexamers on either side of HJ DNA bound by 1 or 2 RuvA tetramers; 4 subunits per hexamer contact DNA at a time. Coordinated motions by a converter formed by DNA-disengaged RuvB subunits stimulates ATP hydrolysis and nucleotide exchange. Immobilization of the converter enables RuvB to convert the ATP-contained energy into a lever motion, pulling 2 nucleotides of DNA out of the RuvA tetramer per ATP hydrolyzed, thus driving DNA branch migration. The RuvB motors rotate together with the DNA substrate, which together with the progressing nucleotide cycle form the mechanistic basis for DNA recombination by continuous HJ branch migration. Branch migration allows RuvC to scan DNA until it finds its consensus sequence, where it cleaves and resolves cruciform DNA. The chain is Holliday junction branch migration complex subunit RuvB from Novosphingobium aromaticivorans (strain ATCC 700278 / DSM 12444 / CCUG 56034 / CIP 105152 / NBRC 16084 / F199).